The primary structure comprises 472 residues: Ribulose bisphosphate carboxylase large chain 1 (472 aa).

Substrate-binding residues include Asn115 and Thr165. Catalysis depends on Lys167, which acts as the Proton acceptor. Substrate is bound at residue Lys169. Mg(2+)-binding residues include Lys193, Asp195, and Glu196. At Lys193 the chain carries N6-carboxylysine. His286 serves as the catalytic Proton acceptor. Arg287, His319, and Ser371 together coordinate substrate.

Belongs to the RuBisCO large chain family. Type I subfamily. Heterohexadecamer of 8 large chains and 8 small chains. Mg(2+) is required as a cofactor.

It catalyses the reaction 2 (2R)-3-phosphoglycerate + 2 H(+) = D-ribulose 1,5-bisphosphate + CO2 + H2O. It carries out the reaction D-ribulose 1,5-bisphosphate + O2 = 2-phosphoglycolate + (2R)-3-phosphoglycerate + 2 H(+). RuBisCO catalyzes two reactions: the carboxylation of D-ribulose 1,5-bisphosphate, the primary event in carbon dioxide fixation, as well as the oxidative fragmentation of the pentose substrate. Both reactions occur simultaneously and in competition at the same active site. This is Ribulose bisphosphate carboxylase large chain 1 from Hydrogenovibrio marinus.